The sequence spans 445 residues: Anthranilate N-benzoyltransferase protein 1 (445 aa).

Catalysis depends on proton acceptor residues His-164 and Asp-392.

Belongs to the plant acyltransferase family. In terms of processing, N-terminus is blocked.

It carries out the reaction anthranilate + benzoyl-CoA = N-benzoylanthranilate + CoA. The protein operates within phytoalexin biosynthesis; methoxydianthramide B biosynthesis. Catalyzes the formation of N-benzoylanthranilate, in the course of methoxydianthramide B, a phytoalexin. Phytoalexins are produced in response to infection by parasites, and are essential for the expression of disease resistance. The protein is Anthranilate N-benzoyltransferase protein 1 (HCBT1) of Dianthus caryophyllus (Carnation).